A 238-amino-acid chain; its full sequence is Fatty acid metabolism regulator protein (238 aa).

Residues 6–74 (QSPAGFAEEY…HGKPTKVNNF (69 aa)) enclose the HTH gntR-type domain. Positions 34–53 (ERELSELIGVTRTTLREVLQ) form a DNA-binding region, H-T-H motif.

In terms of assembly, homodimer.

The protein resides in the cytoplasm. In terms of biological role, multifunctional regulator of fatty acid metabolism. In Erwinia tasmaniensis (strain DSM 17950 / CFBP 7177 / CIP 109463 / NCPPB 4357 / Et1/99), this protein is Fatty acid metabolism regulator protein.